A 119-amino-acid polypeptide reads, in one-letter code: Small ribosomal subunit protein bS6 (119 aa).

Residues 95–119 form a disordered region; that stretch reads AVTEPSPLAKGNEKREDRKESEDAE. Residues 105–119 show a composition bias toward basic and acidic residues; sequence GNEKREDRKESEDAE.

The protein belongs to the bacterial ribosomal protein bS6 family.

In terms of biological role, binds together with bS18 to 16S ribosomal RNA. The polypeptide is Small ribosomal subunit protein bS6 (Halorhodospira halophila (strain DSM 244 / SL1) (Ectothiorhodospira halophila (strain DSM 244 / SL1))).